We begin with the raw amino-acid sequence, 314 residues long: Methionyl-tRNA formyltransferase (314 aa).

113–116 (SLLP) is a binding site for (6S)-5,6,7,8-tetrahydrofolate.

The protein belongs to the Fmt family.

It carries out the reaction L-methionyl-tRNA(fMet) + (6R)-10-formyltetrahydrofolate = N-formyl-L-methionyl-tRNA(fMet) + (6S)-5,6,7,8-tetrahydrofolate + H(+). In terms of biological role, attaches a formyl group to the free amino group of methionyl-tRNA(fMet). The formyl group appears to play a dual role in the initiator identity of N-formylmethionyl-tRNA by promoting its recognition by IF2 and preventing the misappropriation of this tRNA by the elongation apparatus. The chain is Methionyl-tRNA formyltransferase from Pseudomonas aeruginosa (strain LESB58).